We begin with the raw amino-acid sequence, 369 residues long: DNA replication and repair protein RecF (369 aa).

An ATP-binding site is contributed by 30–37 (GRNAQGKT).

This sequence belongs to the RecF family.

The protein localises to the cytoplasm. Functionally, the RecF protein is involved in DNA metabolism; it is required for DNA replication and normal SOS inducibility. RecF binds preferentially to single-stranded, linear DNA. It also seems to bind ATP. The protein is DNA replication and repair protein RecF of Streptococcus agalactiae serotype Ia (strain ATCC 27591 / A909 / CDC SS700).